Reading from the N-terminus, the 492-residue chain is Dynein regulatory complex subunit 2 (492 aa).

Coiled coils occupy residues Leu16–Val95, Val256–Ala318, and Leu373–Ser401.

The protein belongs to the DRC2 family. As to quaternary structure, component of the nexin-dynein regulatory complex (N-DRC).

The protein localises to the cytoplasm. Its subcellular location is the cytoskeleton. It localises to the flagellum basal body. The protein resides in the cell projection. It is found in the cilium. The protein localises to the flagellum. Its subcellular location is the flagellum axoneme. In terms of biological role, component of the nexin-dynein regulatory complex (N-DRC), a key regulator of ciliary/flagellar motility which maintains the alignment and integrity of the distal axoneme and regulates microtubule sliding in motile axonemes. Plays a critical role in the assembly of N-DRC and also stabilizes the assembly of multiple inner dynein arms and radial spokes. Coassembles with DRC1 to form a central scaffold needed for assembly of the N-DRC and its attachment to the outer doublet microtubules. The sequence is that of Dynein regulatory complex subunit 2 (ccdc65) from Danio rerio (Zebrafish).